A 203-amino-acid polypeptide reads, in one-letter code: GTP-binding protein ypt1 (203 aa).

GTP-binding positions include 15–23, 33–40, 63–67, 121–124, and 151–153; these read GDSGVGKSC, YTESYIST, DTAGQ, NKSD, and SAK. The Effector region signature appears at 37 to 45; that stretch reads YISTIGVDF. A disordered region spans residues 180 to 203; it reads NNTKASVNVSPGHGVSNNSSGGCC. S-geranylgeranyl cysteine attachment occurs at residues Cys202 and Cys203.

It belongs to the small GTPase superfamily. Rab family.

The protein resides in the endoplasmic reticulum membrane. It is found in the golgi apparatus membrane. The protein localises to the cytoplasm. Its subcellular location is the preautophagosomal structure membrane. With respect to regulation, rab activation is generally mediated by a guanine exchange factor (GEF), while inactivation through hydrolysis of bound GTP is catalyzed by a GTPase activating protein (GAP). The small GTPases Rab are key regulators of intracellular membrane trafficking, from the formation of transport vesicles to their fusion with membranes. Rabs cycle between an inactive GDP-bound form and an active GTP-bound form that is able to recruit to membranes different set of downstream effectors directly responsible for vesicle formation, movement, tethering and fusion. Ypt-1 regulates the trafficking of secretory vesicles from the endoplasmic reticulum (ER) to the Golgi. Plays a role in the initial events of the autophagic vacuole development which take place at specialized regions of the endoplasmic reticulum. Also involved in the recycling of membrane proteins. The protein is GTP-binding protein ypt1 (ypt-1) of Neurospora crassa (strain ATCC 24698 / 74-OR23-1A / CBS 708.71 / DSM 1257 / FGSC 987).